Reading from the N-terminus, the 79-residue chain is Small ribosomal subunit protein bS18 (79 aa).

It belongs to the bacterial ribosomal protein bS18 family. In terms of assembly, part of the 30S ribosomal subunit. Forms a tight heterodimer with protein bS6.

Functionally, binds as a heterodimer with protein bS6 to the central domain of the 16S rRNA, where it helps stabilize the platform of the 30S subunit. The protein is Small ribosomal subunit protein bS18 of Streptococcus pyogenes serotype M5 (strain Manfredo).